The chain runs to 156 residues: Ribosomal RNA large subunit methyltransferase H (156 aa).

Residues Leu-72, Gly-103, and 122-127 (LSSLTL) contribute to the S-adenosyl-L-methionine site.

It belongs to the RNA methyltransferase RlmH family. As to quaternary structure, homodimer.

It localises to the cytoplasm. It catalyses the reaction pseudouridine(1915) in 23S rRNA + S-adenosyl-L-methionine = N(3)-methylpseudouridine(1915) in 23S rRNA + S-adenosyl-L-homocysteine + H(+). Functionally, specifically methylates the pseudouridine at position 1915 (m3Psi1915) in 23S rRNA. In Dechloromonas aromatica (strain RCB), this protein is Ribosomal RNA large subunit methyltransferase H.